The sequence spans 1255 residues: MSILSKKLNKLDHTIPIYSPRTTYKNIRQNDEHLLADLTLNFDPFTINVLKNEFGIRDMQMKLSEFILVVKEHLLSWQVDIPNRETKLVRCLTNLFEEIDLNGNGILEWDEFTNYVIEKATVLNNIKTKVDEIKTYTKSQVKPLQAQTKHLTHKFNNLVTKILYIPHIDRLALYEEGSAEILFMNPETGVMNNKTLKVVPKSLFVTSSTVKKDEEGLIHVETKKNFIDLKTMILDILYIPDKKYQVLLTSSNDKYVRGWKHSSNGWVLASQPDNEEELIEHEFKNEIYCLAWDSLNEILYCGQKNGNIVIWYFKTDTEKELEREGAHTEVIMDMITMPKLQFLASGALDGLLILWDTINNKKKRVYKEHTRGITSLSFNEALILLFSAGFDHEVCVWNPYIDNLIYKISGHSSPLLGVKVIEGTSQVITLDSDGNVRVTDIKKFSNVQCFSVETSDEKHKFNPQCFTYIPKPLKLAFCGRSVQLYEYDKNYNPNYVDDYVAICCAFVPSQLAFYTPAGNKIKLWNALTGDIKKIFSDVTQGEITCFTLDSLKKRMLIGDSMGQIGIYNTYNGAMIKALPKHSAEIIQIIHADAITMFISAAMDNKINMTLDNDFGENELIRTLELKDVMITSLGFDPITKMIIVATNTGITSFYESDTGKQNGSFSELTQYEEITSLNLIKNLPYIITTTTNGKINFIALPPLLFKFQKVFYFKNEDSEQKLLEQQKIQKEGEQQLQQQQTQQINIGSAKGSILNNMGQGKRKQDDQVQQNLSISNCIYCDQTKCLFLSDDKGFIKCFDISQILTILEKSYNNHKDKSNNGAKSFLIPPNFDGVEYQEVWSQRAHYEMIKSLEYIQEENLLITTAYDKKVKLWDSKTGNLIDQLQQNYDKQEPRPIAFKRSGTEEIYDTNLEERIDLKRKSSLKNAKLLVKNEQKGSQTAIKSLSLTDKKLNTQESSTQEQEAAQQPQQNKNEGVQGQGDDLFANFNPNKTYDEEFNPFYFMDKIDKTKLKTDRSNSDWKLHINYIKYFESFEDSIKQLNIDIQKQEHELREKTEKQGINNRRFKVNPYQNSDLNAQKFGVDHKPILKDEINFKQENQDQHKVKADNRIQEGLNQVTNSQATLPRIASLQNNKLKLQNQQQQVQNQQTEPSSNRSHQQPGIETKTLAAISGDQNKKQKKVWDNLYKKELQSKFLFGSNQSEIRLSKEEVDAAHRLAAALANYDKDDYRSLKFYNIQIKESKGPKKLQPLSQSKKK.

In terms of domain architecture, EF-hand spans 87 to 122 (KLVRCLTNLFEEIDLNGNGILEWDEFTNYVIEKATV). Positions 100, 102, 104, and 111 each coordinate Ca(2+). WD repeat units follow at residues 228–269 (DLKT…WVLA), 282–322 (EFKN…KELE), 326–365 (AHTE…KKRV), 368–407 (EHTR…LIYK), 410–449 (GHSS…NVQC), 496–536 (VDDY…KIFS), 538–577 (VTQG…MIKA), 580–624 (KHSA…RTLE), 625–664 (LKDV…QNGS), 669–708 (TQYE…FKFQ), 769–808 (QQNL…TILE), and 844–883 (AHYE…LIDQ). 2 disordered regions span residues 941 to 988 (IKSL…NFNP) and 1140 to 1160 (QQQV…QQPG). A compositionally biased stretch (low complexity) spans 953–969 (TQESSTQEQEAAQQPQQ). Residues 1148 to 1160 (TEPSSNRSHQQPG) show a composition bias toward polar residues.

Belongs to the CFAP337 family. As to quaternary structure, associates with components of the nexin-dynein regulatory complex (N-DRC) and the CFAP184:CFAP263 complex.

It localises to the cell projection. Its subcellular location is the cilium. Associates with components of the nexin-dynein regulatory complex (N-DRC), a key regulator of ciliary/flagellar motility, and might act as an inner dynein arm (IDA) hub or linkage. This is Cilia- and flagella-associated protein 337 B from Tetrahymena thermophila (strain SB210).